The chain runs to 161 residues: Cyclic pyranopterin monophosphate synthase (161 aa).

Substrate is bound by residues 75 to 77 (LCH) and 113 to 114 (ME). Asp128 is a catalytic residue.

This sequence belongs to the MoaC family. Homohexamer; trimer of dimers.

The catalysed reaction is (8S)-3',8-cyclo-7,8-dihydroguanosine 5'-triphosphate = cyclic pyranopterin phosphate + diphosphate. It functions in the pathway cofactor biosynthesis; molybdopterin biosynthesis. Its function is as follows. Catalyzes the conversion of (8S)-3',8-cyclo-7,8-dihydroguanosine 5'-triphosphate to cyclic pyranopterin monophosphate (cPMP). The chain is Cyclic pyranopterin monophosphate synthase from Enterobacter sp. (strain 638).